The primary structure comprises 322 residues: Phospho-N-acetylmuramoyl-pentapeptide-transferase (322 aa).

10 helical membrane passes run 10 to 30 (YTAL…IPML), 51 to 71 (NGTP…TGLT), 79 to 99 (MAVG…DDFI), 107 to 127 (LGLK…YVAF), 146 to 166 (FVIN…VAIV), 178 to 198 (LASG…SSIA), 203 to 223 (VAVL…FNSY), 227 to 247 (VFMG…FSVL), 250 to 270 (SVLI…SVLI), and 302 to 322 (VVFI…IAVF).

It belongs to the glycosyltransferase 4 family. MraY subfamily. The cofactor is Mg(2+).

The protein localises to the cell membrane. It carries out the reaction UDP-N-acetyl-alpha-D-muramoyl-L-alanyl-gamma-D-glutamyl-meso-2,6-diaminopimeloyl-D-alanyl-D-alanine + di-trans,octa-cis-undecaprenyl phosphate = di-trans,octa-cis-undecaprenyl diphospho-N-acetyl-alpha-D-muramoyl-L-alanyl-D-glutamyl-meso-2,6-diaminopimeloyl-D-alanyl-D-alanine + UMP. Its pathway is cell wall biogenesis; peptidoglycan biosynthesis. Its function is as follows. Catalyzes the initial step of the lipid cycle reactions in the biosynthesis of the cell wall peptidoglycan: transfers peptidoglycan precursor phospho-MurNAc-pentapeptide from UDP-MurNAc-pentapeptide onto the lipid carrier undecaprenyl phosphate, yielding undecaprenyl-pyrophosphoryl-MurNAc-pentapeptide, known as lipid I. The protein is Phospho-N-acetylmuramoyl-pentapeptide-transferase of Clostridioides difficile (strain 630) (Peptoclostridium difficile).